A 157-amino-acid chain; its full sequence is Transcription antitermination protein NusB (157 aa).

It belongs to the NusB family.

In terms of biological role, involved in transcription antitermination. Required for transcription of ribosomal RNA (rRNA) genes. Binds specifically to the boxA antiterminator sequence of the ribosomal RNA (rrn) operons. In Xylella fastidiosa (strain Temecula1 / ATCC 700964), this protein is Transcription antitermination protein NusB.